The primary structure comprises 379 residues: UDP-4-amino-4-deoxy-L-arabinose--oxoglutarate aminotransferase (379 aa).

An N6-(pyridoxal phosphate)lysine modification is found at Lys-182.

Belongs to the DegT/DnrJ/EryC1 family. ArnB subfamily. As to quaternary structure, homodimer. Requires pyridoxal 5'-phosphate as cofactor.

It catalyses the reaction UDP-4-amino-4-deoxy-beta-L-arabinose + 2-oxoglutarate = UDP-beta-L-threo-pentopyranos-4-ulose + L-glutamate. The protein operates within nucleotide-sugar biosynthesis; UDP-4-deoxy-4-formamido-beta-L-arabinose biosynthesis; UDP-4-deoxy-4-formamido-beta-L-arabinose from UDP-alpha-D-glucuronate: step 2/3. Its pathway is bacterial outer membrane biogenesis; lipopolysaccharide biosynthesis. Functionally, catalyzes the conversion of UDP-4-keto-arabinose (UDP-Ara4O) to UDP-4-amino-4-deoxy-L-arabinose (UDP-L-Ara4N). The modified arabinose is attached to lipid A and is required for resistance to polymyxin and cationic antimicrobial peptides. In Salmonella dublin (strain CT_02021853), this protein is UDP-4-amino-4-deoxy-L-arabinose--oxoglutarate aminotransferase.